Reading from the N-terminus, the 510-residue chain is ATP synthase subunit alpha (510 aa).

170–177 (GDRQTGKT) is a binding site for ATP.

It belongs to the ATPase alpha/beta chains family. As to quaternary structure, F-type ATPases have 2 components, CF(1) - the catalytic core - and CF(0) - the membrane proton channel. CF(1) has five subunits: alpha(3), beta(3), gamma(1), delta(1), epsilon(1). CF(0) has three main subunits: a(1), b(2) and c(9-12). The alpha and beta chains form an alternating ring which encloses part of the gamma chain. CF(1) is attached to CF(0) by a central stalk formed by the gamma and epsilon chains, while a peripheral stalk is formed by the delta and b chains.

The protein resides in the cell inner membrane. The catalysed reaction is ATP + H2O + 4 H(+)(in) = ADP + phosphate + 5 H(+)(out). Produces ATP from ADP in the presence of a proton gradient across the membrane. The alpha chain is a regulatory subunit. This chain is ATP synthase subunit alpha, found in Caulobacter sp. (strain K31).